The chain runs to 264 residues: 5'-nucleotidase SurE (264 aa).

Residues D10, D11, S43, and N99 each coordinate a divalent metal cation.

Belongs to the SurE nucleotidase family. A divalent metal cation is required as a cofactor.

It is found in the cytoplasm. The enzyme catalyses a ribonucleoside 5'-phosphate + H2O = a ribonucleoside + phosphate. In terms of biological role, nucleotidase that shows phosphatase activity on nucleoside 5'-monophosphates. The protein is 5'-nucleotidase SurE of Methanococcus vannielii (strain ATCC 35089 / DSM 1224 / JCM 13029 / OCM 148 / SB).